The sequence spans 436 residues: Serine--tRNA ligase (436 aa).

An L-serine-binding site is contributed by 242–244 (TAE). 273 to 275 (RSE) is a binding site for ATP. L-serine is bound at residue Glu296. Position 360–363 (360–363 (EISS)) interacts with ATP. Ser395 contributes to the L-serine binding site.

The protein belongs to the class-II aminoacyl-tRNA synthetase family. Type-1 seryl-tRNA synthetase subfamily. As to quaternary structure, homodimer. The tRNA molecule binds across the dimer.

The protein resides in the cytoplasm. It catalyses the reaction tRNA(Ser) + L-serine + ATP = L-seryl-tRNA(Ser) + AMP + diphosphate + H(+). The catalysed reaction is tRNA(Sec) + L-serine + ATP = L-seryl-tRNA(Sec) + AMP + diphosphate + H(+). Its pathway is aminoacyl-tRNA biosynthesis; selenocysteinyl-tRNA(Sec) biosynthesis; L-seryl-tRNA(Sec) from L-serine and tRNA(Sec): step 1/1. Functionally, catalyzes the attachment of serine to tRNA(Ser). Is also able to aminoacylate tRNA(Sec) with serine, to form the misacylated tRNA L-seryl-tRNA(Sec), which will be further converted into selenocysteinyl-tRNA(Sec). This Polynucleobacter necessarius subsp. necessarius (strain STIR1) protein is Serine--tRNA ligase.